Here is a 460-residue protein sequence, read N- to C-terminus: Muscarinic acetylcholine receptor M1 (460 aa).

The Extracellular segment spans residues methionine 1–proline 22. N-linked (GlcNAc...) asparagine glycans are attached at residues asparagine 2 and asparagine 12. The helical transmembrane segment at tryptophan 23–isoleucine 48 threads the bilayer. The Cytoplasmic portion of the chain corresponds to serine 49 to tyrosine 62. A helical membrane pass occupies residues phenylalanine 63–threonine 84. Over tyrosine 85–threonine 95 the chain is Extracellular. A helical transmembrane segment spans residues leucine 96–phenylalanine 121. A disulfide bridge connects residues cysteine 98 and cysteine 178. The Cytoplasmic segment spans residues aspartate 122 to alanine 142. The chain crosses the membrane as a helical span at residues alanine 143 to tryptophan 164. At glutamine 165 to glutamine 185 the chain is on the extracellular side. Residues proline 186–tryptophan 209 traverse the membrane as a helical segment. Residues arginine 210–threonine 366 are Cytoplasmic-facing. Disordered stretches follow at residues leucine 225 to glycine 257, tryptophan 274 to glycine 297, and glutamate 310 to lysine 351. The residue at position 230 (threonine 230) is a Phosphothreonine. Over residues serine 238–glycine 257 the composition is skewed to low complexity. Serine 254 bears the Phosphoserine mark. Positions arginine 328 to proline 343 are enriched in basic residues. Residues leucine 367–phenylalanine 390 form a helical membrane-spanning segment. Residues cysteine 391–glutamate 397 are Extracellular-facing. A helical membrane pass occupies residues threonine 398 to leucine 420. Topologically, residues cysteine 421 to cysteine 460 are cytoplasmic. Position 451 is a phosphoserine (serine 451). Threonine 455 is modified (phosphothreonine). Serine 457 carries the post-translational modification Phosphoserine.

The protein belongs to the G-protein coupled receptor 1 family. Muscarinic acetylcholine receptor subfamily. CHRM1 sub-subfamily. As to quaternary structure, interacts with GPRASP2. Interacts with TMEM147.

It localises to the cell membrane. The protein localises to the postsynaptic cell membrane. The muscarinic acetylcholine receptor mediates various cellular responses, including inhibition of adenylate cyclase, breakdown of phosphoinositides and modulation of potassium channels through the action of G proteins. Primary transducing effect is Pi turnover. This Mus musculus (Mouse) protein is Muscarinic acetylcholine receptor M1 (Chrm1).